Here is a 206-residue protein sequence, read N- to C-terminus: MGGKWSKSSVVGWPAVRERMRRAEPAADGVGAASRDLEKHGAITSSNTAANNAACAWLEAQEEEKVGFPVTPQVPLRPMTYKAAVDLSHFLKEKGGLEGLIHSQRRQDILDLWIYHTQGYFPDWQNYTPGPGIRYPLTFGWRYKLVPVEPEKLEEANKGENTSLLHPVSLHGMDDPEREVLEWRFDSRLAFHHVARELHPEYFKNC.

A lipid anchor (N-myristoyl glycine; by host) is attached at glycine 2. Residue serine 6 is modified to Phosphoserine; by host. The tract at residues 62 to 65 (EEEK) is acidic; interacts with host PACS1 and PACS2; stabilizes the interaction of NEF/MHC-I with host AP1M1; necessary for MHC-I internalization. The segment at 69 to 78 (PVTPQVPLRP) is SH3-binding; interaction with Src family tyrosine kinases. The PxxP; stabilizes the interaction of NEF/MHC-I with host AP1M1; necessary for MHC-I internalization motif lies at 72–75 (PQVP). Residues 108–124 (DILDLWIYHTQGYFPDW) form a mediates dimerization, Nef-PTE1 interaction region. The binding to ATP6V1H stretch occupies residues 148–180 (VEPEKLEEANKGENTSLLHPVSLHGMDDPEREV). Residues 164–165 (LL) carry the Dileucine internalization motif; necessary for CD4 internalization motif. Residues 174 to 175 (DD) carry the Diacidic; necessary for CD4 internalization motif.

Belongs to the lentivirus primate group Nef protein family. As to quaternary structure, monomer; cytosolic form. Homodimer; membrane bound form. Interacts with Nef associated p21-activated kinase (PAK2); this interaction activates PAK2. Associates with the Nef-MHC-I-AP1 complex; this complex is required for MHC-I internalization. Interacts (via C-terminus) with host PI3-kinase. Interacts with host PACS1; this interaction seems to be weak. Interacts with host PACS2. Interacts with host LCK and MAPK3; these interactions inhibit the kinase activity of the latter. Interacts with host ATP6V1H; this interaction may play a role in CD4 endocytosis. Associates with the CD4-Nef-AP2 complex; this complex is required for CD4 internalization. Interacts with host AP2 subunit alpha and AP2 subunit sigma2. Interacts with TCR-zeta chain; this interaction up-regulates the Fas ligand (FasL) surface expression. Interacts with host HCK, LYN, and SRC; these interactions activate the Src family kinases. Interacts with MAP3K5; this interaction inhibits the Fas and TNFR-mediated death signals. Interacts with beta-COP and PTE1. Interacts with human RACK1; this increases Nef phosphorylation by PKC. Interacts with TP53; this interaction decreases the half-life of TP53, protecting the infected cell against p53-mediated apoptosis. In terms of processing, the virion-associated Nef proteins are cleaved by the viral protease to release the soluble C-terminal core protein. Nef is probably cleaved concomitantly with viral structural proteins on maturation of virus particles. Myristoylated. Post-translationally, phosphorylated on serine residues, probably by host PKCdelta and theta.

It is found in the host cell membrane. It localises to the virion. Its subcellular location is the secreted. The protein resides in the host Golgi apparatus membrane. Factor of infectivity and pathogenicity, required for optimal virus replication. Alters numerous pathways of T-lymphocyte function and down-regulates immunity surface molecules in order to evade host defense and increase viral infectivity. Alters the functionality of other immunity cells, like dendritic cells, monocytes/macrophages and NK cells. Functionally, in infected CD4(+) T-lymphocytes, down-regulates the surface MHC-I, mature MHC-II, CD4, CD28, CCR5 and CXCR4 molecules. Mediates internalization and degradation of host CD4 through the interaction of with the cytoplasmic tail of CD4, the recruitment of AP-2 (clathrin adapter protein complex 2), internalization through clathrin coated pits, and subsequent transport to endosomes and lysosomes for degradation. Diverts host MHC-I molecules to the trans-Golgi network-associated endosomal compartments by an endocytic pathway to finally target them for degradation. MHC-I down-regulation may involve AP-1 (clathrin adapter protein complex 1) or possibly Src family kinase-ZAP70/Syk-PI3K cascade recruited by PACS2. In consequence infected cells are masked for immune recognition by cytotoxic T-lymphocytes. Decreasing the number of immune receptors also prevents reinfection by more HIV particles (superinfection). Down-regulates host SERINC3 and SERINC5 thereby excluding these proteins from the viral particles. Virion infectivity is drastically higher when SERINC3 or SERINC5 are excluded from the viral envelope, because these host antiviral proteins impair the membrane fusion event necessary for subsequent virion penetration. Its function is as follows. Bypasses host T-cell signaling by inducing a transcriptional program nearly identical to that of anti-CD3 cell activation. Interaction with TCR-zeta chain up-regulates the Fas ligand (FasL). Increasing surface FasL molecules and decreasing surface MHC-I molecules on infected CD4(+) cells send attacking cytotoxic CD8+ T-lymphocytes into apoptosis. In terms of biological role, plays a role in optimizing the host cell environment for viral replication without causing cell death by apoptosis. Protects the infected cells from apoptosis in order to keep them alive until the next virus generation is ready to strike. Inhibits the Fas and TNFR-mediated death signals by blocking MAP3K5/ASK1. Decreases the half-life of TP53, protecting the infected cell against p53-mediated apoptosis. Inhibits the apoptotic signals regulated by the Bcl-2 family proteins through the formation of a Nef/PI3-kinase/PAK2 complex that leads to activation of PAK2 and induces phosphorylation of host BAD. Extracellular Nef protein targets CD4(+) T-lymphocytes for apoptosis by interacting with CXCR4 surface receptors. This Homo sapiens (Human) protein is Protein Nef.